The primary structure comprises 1387 residues: Collagen-like protein 6 (1387 aa).

Asparagine 6 carries an N-linked (GlcNAc...) asparagine; by host glycan. 6 consecutive Collagen-like domains span residues 95 to 154 (GNNG…KGDI), 161 to 220 (GDKG…KGDN), 266 to 325 (GEKG…KGEM), 344 to 403 (GSKG…KGEK), 450 to 508 (IKGD…KGDI), and 512 to 751 (GEKG…SGSS). 3 disordered regions span residues 98-219 (GNNG…DKGD), 268-422 (KGEI…QNQG), and 454-753 (KGEK…SSCQ). Basic and acidic residues-rich tracts occupy residues 114 to 181 (IKGD…KGSK), 189 to 199 (SKGDNGDKGSK), 207 to 219 (SKGD…DKGD), 268 to 340 (KGEI…DGIK), 364 to 382 (KGDR…KGDN), 390 to 405 (SKGD…EKGE), 454 to 535 (KGEK…KGDI), and 544 to 747 (KGEK…DKGE). N-linked (GlcNAc...) asparagine; by host glycans are attached at residues asparagine 794, asparagine 814, asparagine 819, asparagine 826, asparagine 846, asparagine 886, asparagine 894, asparagine 969, asparagine 1032, asparagine 1077, asparagine 1123, asparagine 1200, asparagine 1224, asparagine 1232, and asparagine 1233.

Post-translationally, may be hydroxylated on lysine by the viral-encoded procollagen-lysine,2-oxoglutarate 5-dioxygenase.

The protein resides in the virion. May participate in the formation of a layer of cross-linked glycosylated fibrils at the viral surface thus giving it a hairy-like appearance. In Acanthamoeba polyphaga mimivirus (APMV), this protein is Collagen-like protein 6.